We begin with the raw amino-acid sequence, 392 residues long: Odorant receptor 85f (392 aa).

Over 1–36 the chain is Cytoplasmic; that stretch reads MEPVQYSYEDFARLPTTVFWIMGYDMLGVPKTRSRR. A helical membrane pass occupies residues 37 to 57; the sequence is ILYWIYRFLCLASHGVCVGVM. Topologically, residues 58–69 are extracellular; that stretch reads VFRMVEAKTIDN. N-linked (GlcNAc...) asparagine glycosylation is present at asparagine 69. A helical membrane pass occupies residues 70-90; the sequence is VSLIMRYATLVTYIINSDTKF. The Cytoplasmic segment spans residues 91-130; it reads ATVLQRSAIQSLNSKLAELYPKTTLDRIYHRVNDHYWTKS. Residues 131–151 traverse the membrane as a helical segment; that stretch reads FVYLVIIYIGSSIMVVIGPII. Residues 152 to 179 are Extracellular-facing; that stretch reads TSIIAYFTHNVFTYMHCYPYFLYDPEKD. Residues 180–200 form a helical membrane-spanning segment; it reads PVWIYISIYALEWLHSTQMVI. Over 201–268 the chain is Cytoplasmic; the sequence is SNIGADIWLL…NDLNGIFGKS (68 aa). The chain crosses the membrane as a helical span at residues 269–289; sequence LLLSLLTTAAVICTVAVYTLI. The Extracellular segment spans residues 290 to 295; it reads QGPTLE. A helical transmembrane segment spans residues 296–316; sequence GFTYVIFIGTSVMQVYLVCYY. Over 317–363 the chain is Cytoplasmic; it reads GQQVLDLSGEVAHAVYNHDFHDASIAYKRYLLIIIIRAQQPVELNAM. A helical transmembrane segment spans residues 364–384; sequence GYLSISLDTFKQLMSVSYRVI. The Extracellular segment spans residues 385–392; it reads TMLMQMIQ.

It belongs to the insect chemoreceptor superfamily. Heteromeric odorant receptor channel (TC 1.A.69) family. Or49a subfamily. In terms of assembly, interacts with Orco. Complexes exist early in the endomembrane system in olfactory sensory neurons (OSNs), coupling these complexes to the conserved ciliary trafficking pathway. Expressed in olfactory sensory neurons in the antenna.

The protein localises to the cell membrane. Its function is as follows. Odorant receptor which mediates acceptance or avoidance behavior, depending on its substrates. The odorant receptor repertoire encodes a large collection of odor stimuli that vary widely in identity, intensity, and duration. May form a complex with Orco to form odorant-sensing units, providing sensitive and prolonged odorant signaling and calcium permeability. This is Odorant receptor 85f (Or85f) from Drosophila melanogaster (Fruit fly).